The sequence spans 430 residues: 3-phosphoshikimate 1-carboxyvinyltransferase (430 aa).

Residues lysine 23, serine 24, and arginine 28 each coordinate 3-phosphoshikimate. Residue lysine 23 participates in phosphoenolpyruvate binding. Phosphoenolpyruvate contacts are provided by glycine 95 and arginine 123. Serine 169, glutamine 171, aspartate 315, and lysine 342 together coordinate 3-phosphoshikimate. Residue glutamine 171 coordinates phosphoenolpyruvate. The Proton acceptor role is filled by aspartate 315. Phosphoenolpyruvate contacts are provided by arginine 346 and arginine 388.

Belongs to the EPSP synthase family. As to quaternary structure, monomer.

It localises to the cytoplasm. The catalysed reaction is 3-phosphoshikimate + phosphoenolpyruvate = 5-O-(1-carboxyvinyl)-3-phosphoshikimate + phosphate. The protein operates within metabolic intermediate biosynthesis; chorismate biosynthesis; chorismate from D-erythrose 4-phosphate and phosphoenolpyruvate: step 6/7. In terms of biological role, catalyzes the transfer of the enolpyruvyl moiety of phosphoenolpyruvate (PEP) to the 5-hydroxyl of shikimate-3-phosphate (S3P) to produce enolpyruvyl shikimate-3-phosphate and inorganic phosphate. The polypeptide is 3-phosphoshikimate 1-carboxyvinyltransferase (Streptococcus pyogenes serotype M1).